The chain runs to 225 residues: Fibronectin type III domain-containing protein 10 (225 aa).

The first 19 residues, 1–19 (MRAPPLLLLLAACAPPSGA), serve as a signal peptide directing secretion. Residues 20–181 (AVDPTPPGWE…FTAEPAAMQE (162 aa)) are Extracellular-facing. One can recognise a Fibronectin type-III domain in the interval 72–167 (LASAGGSLRA…ELAAAPPELA (96 aa)). N-linked (GlcNAc...) asparagine glycans are attached at residues Asn-86 and Asn-109. Residues 182 to 202 (IVVAMTAVGGSICVMLVVICL) traverse the membrane as a helical segment. Residues 203 to 225 (LVAYITENLMHPTFRRPSLRRQP) lie on the Cytoplasmic side of the membrane.

It localises to the membrane. The sequence is that of Fibronectin type III domain-containing protein 10 (Fndc10) from Rattus norvegicus (Rat).